A 577-amino-acid polypeptide reads, in one-letter code: Pentatricopeptide repeat-containing protein At1g63400 (577 aa).

PPR repeat units follow at residues 49–83, 84–118, 119–153, 154–188, 189–223, 224–258, 259–293, 294–328, 329–363, 364–398, 399–433, 434–468, 469–503, 504–538, and 539–573; these read GSGDYREILRNGLHSMKLDDAIGLFGGMVKSRPLP, SIFEFNKLLSAIAKMKKFDLVISLGEKMQRLGISH, NLYTYNILINCFCRRSQISLALALLGKMMKLGYEP, SIVTLSSLLNGYCHGKRISDAVALVDQMVEMGYRP, DTITFTTLIHGLFLHNKASEAVALVDRMVQRGCQP, NLVTYGVVVNGLCKRGDIDLAFNLLNKMEAAKIEA, NVVIYSTVIDSLCKYRHEDDALNLFTEMENKGVRP, NVITYSSLISCLCNYERWSDASRLLSDMIERKINP, NVVTFNALIDAFVKEGKLVEAEKLYDEMIKRSIDP, DIFTYSSLINGFCMHDRLDEAKHMFELMISKDCFP, NVVTYNTLINGFCKAKRIDEGVELFREMSQRGLVG, NTVTYTTLIHGFFQARDCDNAQMVFKQMVSDGVHP, NIMTYNTLLDGLCKNGKLEKAMVVFEYLQRSKMEP, TIYTYNIMIEGMCKAGKVEDGWDLFCSLSLKGVKP, and DVIIYNTMISGFCRKGLKEEADALFRKMREDGPLP.

It belongs to the PPR family. P subfamily.

This is Pentatricopeptide repeat-containing protein At1g63400 from Arabidopsis thaliana (Mouse-ear cress).